The primary structure comprises 165 residues: Cytochrome c-type biogenesis protein CcmE (165 aa).

Residues 1-29 (MSATAEDNARGAKPAGNFARTVSQRKRKR) are Cytoplasmic-facing. Residues 30 to 50 (LFLIGGALAVLAVAVGLMLMA) traverse the membrane as a helical; Signal-anchor for type II membrane protein segment. Topologically, residues 51 to 165 (FSQDIRFFRT…LKEKGVWEGK (115 aa)) are periplasmic. Heme contacts are provided by histidine 143 and tyrosine 147.

Belongs to the CcmE/CycJ family.

It is found in the cell inner membrane. In terms of biological role, heme chaperone required for the biogenesis of c-type cytochromes. Transiently binds heme delivered by CcmC and transfers the heme to apo-cytochromes in a process facilitated by CcmF and CcmH. In Brucella anthropi (strain ATCC 49188 / DSM 6882 / CCUG 24695 / JCM 21032 / LMG 3331 / NBRC 15819 / NCTC 12168 / Alc 37) (Ochrobactrum anthropi), this protein is Cytochrome c-type biogenesis protein CcmE.